A 431-amino-acid chain; its full sequence is Magnetosome protein MamH (431 aa).

Helical transmembrane passes span 21-41 (LLSA…PLFL), 57-77 (ANVQ…LGYL), 86-106 (IIVA…LSPW), 107-127 (IGGA…IMSA), 156-176 (TAFM…QIPA), 178-198 (AGIA…AWLA), 243-263 (MVFV…LIKV), 274-294 (ILIG…RSFI), 302-321 (AVLL…GFII), 358-378 (LLGS…IFFV), and 380-400 (VGGF…TGVG).

This sequence belongs to the major facilitator superfamily.

It localises to the magnetosome membrane. Functionally, required for correct biomineralization of the magnetosome; probably transports some form of iron. Partially functionally redundant with MamZ. The protein is Magnetosome protein MamH (mamH) of Paramagnetospirillum magneticum (strain ATCC 700264 / AMB-1) (Magnetospirillum magneticum).